The primary structure comprises 483 residues: UDP-N-acetylmuramate--L-alanine ligase (483 aa).

Position 112 to 118 (112 to 118 (GTHGKTT)) interacts with ATP.

Belongs to the MurCDEF family.

The protein resides in the cytoplasm. The catalysed reaction is UDP-N-acetyl-alpha-D-muramate + L-alanine + ATP = UDP-N-acetyl-alpha-D-muramoyl-L-alanine + ADP + phosphate + H(+). Its pathway is cell wall biogenesis; peptidoglycan biosynthesis. Functionally, cell wall formation. The chain is UDP-N-acetylmuramate--L-alanine ligase from Ralstonia nicotianae (strain ATCC BAA-1114 / GMI1000) (Ralstonia solanacearum).